Here is a 242-residue protein sequence, read N- to C-terminus: MKITNLGTSGYASFYVACELYKQMSQQNHSKLGLATGGTMVDVYRFLVQLLRKNKLDVSEIETFNLDEYVGLDAQHEQSYHSYMNEMLFKQYPYFNPSLLHIPNGDADNLNDETKRYEQLINQKGPVDIQILGIGENGHIGFNEPGTDINSATHIVDLTESTISANSRYFDNEVDVPKQAVSMGLSTILKAHRIILLAFGEKKRAAIEKLAENEVNSDVPATILHAHPNVEIYVDDEAAPRL.

Residue D67 is the Proton acceptor; for enolization step of the active site. The For ring-opening step role is filled by N137. H139 acts as the Proton acceptor; for ring-opening step in catalysis. E144 acts as the For ring-opening step in catalysis.

Belongs to the glucosamine/galactosamine-6-phosphate isomerase family. NagB subfamily.

It catalyses the reaction alpha-D-glucosamine 6-phosphate + H2O = beta-D-fructose 6-phosphate + NH4(+). The protein operates within amino-sugar metabolism; N-acetylneuraminate degradation; D-fructose 6-phosphate from N-acetylneuraminate: step 5/5. Catalyzes the reversible isomerization-deamination of glucosamine 6-phosphate (GlcN6P) to form fructose 6-phosphate (Fru6P) and ammonium ion. This is Glucosamine-6-phosphate deaminase from Staphylococcus saprophyticus subsp. saprophyticus (strain ATCC 15305 / DSM 20229 / NCIMB 8711 / NCTC 7292 / S-41).